Consider the following 66-residue polypeptide: Large ribosomal subunit protein uL29 (66 aa).

Belongs to the universal ribosomal protein uL29 family.

The sequence is that of Large ribosomal subunit protein uL29 from Nitrosococcus oceani (strain ATCC 19707 / BCRC 17464 / JCM 30415 / NCIMB 11848 / C-107).